The chain runs to 598 residues: Polypeptide N-acetylgalactosaminyltransferase 17 (598 aa).

At methionine 1 to arginine 6 the chain is on the cytoplasmic side. Residues valine 7–lysine 27 traverse the membrane as a helical; Signal-anchor for type II membrane protein segment. Over cysteine 28 to lysine 598 the chain is Lumenal. N-linked (GlcNAc...) asparagine glycosylation occurs at asparagine 50. 2 disulfides stabilise this stretch: cysteine 142–cysteine 373 and cysteine 364–cysteine 443. The catalytic subdomain A stretch occupies residues leucine 151–arginine 262. Positions 192 and 223 each coordinate substrate. The Mn(2+) site is built by aspartate 246, histidine 248, and histidine 378. The tract at residues proline 319–arginine 381 is catalytic subdomain B. Substrate-binding residues include arginine 381 and tyrosine 386. 2 N-linked (GlcNAc...) asparagine glycosylation sites follow: asparagine 461 and asparagine 486. Residues alanine 465 to lysine 594 form the Ricin B-type lectin domain. 3 disulfide bridges follow: cysteine 478–cysteine 494, cysteine 526–cysteine 541, and cysteine 568–cysteine 586.

This sequence belongs to the glycosyltransferase 2 family. GalNAc-T subfamily. Mn(2+) is required as a cofactor.

The protein resides in the golgi apparatus membrane. It carries out the reaction L-seryl-[protein] + UDP-N-acetyl-alpha-D-galactosamine = a 3-O-[N-acetyl-alpha-D-galactosaminyl]-L-seryl-[protein] + UDP + H(+). The enzyme catalyses L-threonyl-[protein] + UDP-N-acetyl-alpha-D-galactosamine = a 3-O-[N-acetyl-alpha-D-galactosaminyl]-L-threonyl-[protein] + UDP + H(+). It functions in the pathway protein modification; protein glycosylation. Functionally, may catalyze the initial reaction in O-linked oligosaccharide biosynthesis, the transfer of an N-acetyl-D-galactosamine residue to a serine or threonine residue on the protein receptor. This Mus musculus (Mouse) protein is Polypeptide N-acetylgalactosaminyltransferase 17.